The following is a 226-amino-acid chain: Putative DNA repair protein recA homolog 4 (226 aa).

41–48 (GPEASGKT) contacts ATP.

The protein belongs to the RecA family.

It is found in the cytoplasm. Functionally, involved in recombination ability and DNA strand transfer activity. This is Putative DNA repair protein recA homolog 4 from Arabidopsis thaliana (Mouse-ear cress).